A 298-amino-acid chain; its full sequence is Short-chain dehydrogenase reductase 4 (298 aa).

50–74 (IITGGASGIGAEAVRLFTDHGAKVV) serves as a coordination point for NAD(+). Substrate is bound at residue Ser182. Tyr195 functions as the Proton acceptor in the catalytic mechanism.

This sequence belongs to the short-chain dehydrogenases/reductases (SDR) family.

The polypeptide is Short-chain dehydrogenase reductase 4 (SDR4) (Arabidopsis thaliana (Mouse-ear cress)).